Consider the following 668-residue polypeptide: Endoplasmic reticulum oxidoreductin-1 (668 aa).

Positions 1-22 (MKPASRLFYLSLFALWSPEAQC) are cleaved as a signal peptide. 4 cysteine pairs are disulfide-bonded: cysteine 79-cysteine 413, cysteine 89-cysteine 94, cysteine 150-cysteine 352, and cysteine 416-cysteine 419. Residues 116–142 (KLEGPRAKHPGKSVQKEEPKRPLQGKL) form a disordered region. Arginine 186, threonine 188, tryptophan 199, serine 282, and histidine 285 together coordinate FAD. Residues asparagine 298 and asparagine 307 are each glycosylated (N-linked (GlcNAc...) asparagine). An FAD-binding site is contributed by arginine 314. Asparagine 406 carries N-linked (GlcNAc...) asparagine glycosylation. The Nucleophile role is filled by cysteine 416. The active site involves cysteine 419. An N-linked (GlcNAc...) asparagine glycan is attached at asparagine 443. 2 disordered regions span residues 488–519 (VEES…DRAK) and 554–597 (GVTP…DPNF). The span at 494–509 (GQQPQSHEQIEGSENS) shows a compositional bias: polar residues. Positions 570–581 (DNNDDDDDDDEF) are enriched in acidic residues.

It belongs to the EROs family. As to quaternary structure, may function both as a monomer and a homodimer. FAD serves as cofactor.

Its subcellular location is the endoplasmic reticulum membrane. In terms of biological role, essential oxidoreductase that oxidizes proteins in the endoplasmic reticulum to produce disulfide bonds. Acts by oxidizing directly pdi1 isomerase through a direct disulfide exchange. Does not act as a direct oxidant of folding substrate, but relies on pdi1 to transfer oxidizing equivalent. Does not oxidize all pdi related proteins, suggesting that it can discriminate between pdi1 and related proteins. Its reoxidation probably involves electron transfer to molecular oxygen via FAD. Acts independently of glutathione. May be responsible for a significant proportion of reactive oxygen species (ROS) in the cell, thereby being a source of oxidative stress. The protein is Endoplasmic reticulum oxidoreductin-1 (ero-1) of Neurospora crassa (strain ATCC 24698 / 74-OR23-1A / CBS 708.71 / DSM 1257 / FGSC 987).